An 87-amino-acid polypeptide reads, in one-letter code: Acyl carrier protein TtuC (87 aa).

One can recognise a Carrier domain in the interval 11–87; sequence ITAEDVQQWL…HALSQFIAAK (77 aa). O-(pantetheine 4'-phosphoryl)serine is present on serine 48.

Pantetheine 4'-phosphate serves as cofactor.

Functionally, carrier protein likely involved in the biosynthesis of a polyyne metabolite. Accepts as substrate the activated form of decanoic acid from TtuA. The sequence is that of Acyl carrier protein TtuC from Teredinibacter turnerae (strain ATCC 39867 / T7901).